The following is a 162-amino-acid chain: ATP synthase subunit b (162 aa).

Residues 6–25 (TLFTLVTFLVLMLAVGKVAW) traverse the membrane as a helical segment.

The protein belongs to the ATPase B chain family. In terms of assembly, F-type ATPases have 2 components, F(1) - the catalytic core - and F(0) - the membrane proton channel. F(1) has five subunits: alpha(3), beta(3), gamma(1), delta(1), epsilon(1). F(0) has three main subunits: a(1), b(2) and c(10-14). The alpha and beta chains form an alternating ring which encloses part of the gamma chain. F(1) is attached to F(0) by a central stalk formed by the gamma and epsilon chains, while a peripheral stalk is formed by the delta and b chains.

It localises to the cell membrane. In terms of biological role, f(1)F(0) ATP synthase produces ATP from ADP in the presence of a proton or sodium gradient. F-type ATPases consist of two structural domains, F(1) containing the extramembraneous catalytic core and F(0) containing the membrane proton channel, linked together by a central stalk and a peripheral stalk. During catalysis, ATP synthesis in the catalytic domain of F(1) is coupled via a rotary mechanism of the central stalk subunits to proton translocation. Component of the F(0) channel, it forms part of the peripheral stalk, linking F(1) to F(0). The polypeptide is ATP synthase subunit b (Lacticaseibacillus casei (strain BL23) (Lactobacillus casei)).